The sequence spans 378 residues: Protein RecA (378 aa).

79-86 (GPESSGKT) lines the ATP pocket.

Belongs to the RecA family.

Its subcellular location is the cytoplasm. Can catalyze the hydrolysis of ATP in the presence of single-stranded DNA, the ATP-dependent uptake of single-stranded DNA by duplex DNA, and the ATP-dependent hybridization of homologous single-stranded DNAs. It interacts with LexA causing its activation and leading to its autocatalytic cleavage. The polypeptide is Protein RecA (Streptococcus pyogenes serotype M28 (strain MGAS6180)).